The sequence spans 200 residues: V-type proton ATPase subunit E (200 aa).

This sequence belongs to the V-ATPase E subunit family.

In terms of biological role, produces ATP from ADP in the presence of a proton gradient across the membrane. The chain is V-type proton ATPase subunit E from Thermoanaerobacter pseudethanolicus (strain ATCC 33223 / 39E) (Clostridium thermohydrosulfuricum).